The sequence spans 443 residues: Exodeoxyribonuclease 7 large subunit (443 aa).

It belongs to the XseA family. In terms of assembly, heterooligomer composed of large and small subunits.

It localises to the cytoplasm. The catalysed reaction is Exonucleolytic cleavage in either 5'- to 3'- or 3'- to 5'-direction to yield nucleoside 5'-phosphates.. In terms of biological role, bidirectionally degrades single-stranded DNA into large acid-insoluble oligonucleotides, which are then degraded further into small acid-soluble oligonucleotides. This Vibrio campbellii (strain ATCC BAA-1116) protein is Exodeoxyribonuclease 7 large subunit.